A 298-amino-acid polypeptide reads, in one-letter code: 4-hydroxy-tetrahydrodipicolinate synthase (298 aa).

T48 provides a ligand contact to pyruvate. Y137 acts as the Proton donor/acceptor in catalysis. The active-site Schiff-base intermediate with substrate is the K166. I207 provides a ligand contact to pyruvate.

The protein belongs to the DapA family. As to quaternary structure, homotetramer; dimer of dimers.

It is found in the cytoplasm. The enzyme catalyses L-aspartate 4-semialdehyde + pyruvate = (2S,4S)-4-hydroxy-2,3,4,5-tetrahydrodipicolinate + H2O + H(+). It functions in the pathway amino-acid biosynthesis; L-lysine biosynthesis via DAP pathway; (S)-tetrahydrodipicolinate from L-aspartate: step 3/4. In terms of biological role, catalyzes the condensation of (S)-aspartate-beta-semialdehyde [(S)-ASA] and pyruvate to 4-hydroxy-tetrahydrodipicolinate (HTPA). The polypeptide is 4-hydroxy-tetrahydrodipicolinate synthase (Campylobacter jejuni subsp. jejuni serotype O:23/36 (strain 81-176)).